Here is a 282-residue protein sequence, read N- to C-terminus: Complement component 1 Q subcomponent-binding protein, mitochondrial (282 aa).

Residues 1–73 (MLPLLRCVPR…PCACGCGCGS (73 aa)) constitute a mitochondrion transit peptide. A C1q binding region spans residues 76–93 (TDGDKAFVDFLSDEIKEE). Phosphoserine is present on Ser87. Lys91 is subject to N6-acetyllysine. A disordered region spans residues 138-164 (SIPPTFDGEEEPSQGQKVEEQEPELTS). Positions 168-213 (FVVEVIKNDDGKKALVLDCHYPEDEVGQEDEAESDIFSIREVSFQS) are interaction with MAVS. Tyr188 bears the Phosphotyrosine mark. 2 positions are modified to phosphoserine: Ser201 and Ser205. Thr214 is modified (phosphothreonine).

It belongs to the MAM33 family. In terms of assembly, homotrimer; three monomers form a donut-shaped structure with an unusually asymmetric charge distribution on the surface. Interacts with CDK13, HRK, VTN, NFYB, ADRA1B, FOXC1, DDX21, DDX50, NCL, SRSF1, SRSF9 and CDKN2A isoform smARF. Interacts with CD93; the association may represent a cell surface C1q receptor. Interacts with KRT1; the association represents a cell surface kininogen receptor. Interacts with CD209; the interaction is indicative for a C1q:C1QBP:CD209 signaling complex. Interacts with FBL and RRP1; the respective interactions with C1QBP are competitive. Probably associates with the mitoribosome. Interacts with MAVS; the interaction occurs upon viral transfection. Interacts with PPIF. Interacts with U2AF1L4. Interacts with PLEKHN1. Interacts with VGF-derived peptide TLQP-21. Interacts with POLGARF which is produced from an alternative reading frame of the POLG gene; the interaction results in nucleolar localization of C1QBP, probably due to prevention of C1QBP maturation and redirection from mitochondria to nucleoli. Interacts with MRE11 and RAD50; forming the MRC (MRE11-RAD50-C1QBP) complex that inhibits the activity of MRE11. As to quaternary structure, (Microbial infection) Interacts with Rubella virus capsid protein; the interaction occurs in mitochondria. Interacts with Rubella virus protease/methyltransferase p150. (Microbial infection) Interacts with Staphylococcus aureus protein A/spa. In terms of assembly, (Microbial infection) Interacts with Staphylococcus aureus protein A/spa, HIV-1 Tat and HCV core protein. As to quaternary structure, (Microbial infection) Interacts with HIV-1 Tat and HCV core protein. (Microbial infection) Interacts with L.monocytogenes internalin B. In terms of assembly, (Microbial infection) Interacts with Epstein-Barr virus EBNA1. In terms of tissue distribution, expressed on cell surface of peripheral blood cells (at protein level); Surface expression is reported for macrophages and monocyte-derived dendritic cells.

It localises to the mitochondrion matrix. Its subcellular location is the nucleus. The protein resides in the nucleolus. The protein localises to the cell membrane. It is found in the secreted. It localises to the cytoplasm. Multifunctional and multicompartmental protein involved in inflammation and infection processes, ribosome biogenesis, protein synthesis in mitochondria, regulation of apoptosis, transcriptional regulation and pre-mRNA splicing. At the cell surface is thought to act as an endothelial receptor for plasma proteins of the complement and kallikrein-kinin cascades. Putative receptor for C1q; specifically binds to the globular 'heads' of C1q thus inhibiting C1; may perform the receptor function through a complex with C1qR/CD93. In complex with cytokeratin-1/KRT1 is a high affinity receptor for kininogen-1/HMWK. Can also bind other plasma proteins, such as coagulation factor XII leading to its autoactivation. May function to bind initially fluid kininogen-1 to the cell membrane. The secreted form may enhance both extrinsic and intrinsic coagulation pathways. It is postulated that the cell surface form requires docking with transmembrane proteins for downstream signaling which might be specific for a cell-type or response. By acting as C1q receptor is involved in chemotaxis of immature dendritic cells and neutrophils and is proposed to signal through CD209/DC-SIGN on immature dendritic cells, through integrin alpha-4/beta-1 during trophoblast invasion of the decidua, and through integrin beta-1 during endothelial cell adhesion and spreading. Signaling involved in inhibition of innate immune response is implicating the PI3K-AKT/PKB pathway. Required for protein synthesis in mitochondria. In mitochondrial translation may be involved in formation of functional 55S mitoribosomes; the function seems to involve its RNA-binding activity. Acts as a RNA modification reader, which specifically recognizes and binds mitochondrial RNAs modified by C5-methylcytosine (m5C) in response to stress, and promotes recruitment of the mitochondrial degradosome complex, leading to their degradation. May be involved in the nucleolar ribosome maturation process; the function may involve the exchange of FBL for RRP1 in the association with pre-ribosome particles. Involved in regulation of RNA splicing by inhibiting the RNA-binding capacity of SRSF1 and its phosphorylation. Is required for the nuclear translocation of splicing factor U2AF1L4. Involved in regulation of CDKN2A- and HRK-mediated apoptosis. Stabilizes mitochondrial CDKN2A isoform smARF. May be involved in regulation of FOXC1 transcriptional activity and NFY/CCAAT-binding factor complex-mediated transcription. May play a role in antibacterial defense as it can bind to cell surface hyaluronan and inhibit Streptococcus pneumoniae hyaluronate lyase. May be involved in modulation of the immune response; ligation by HCV core protein is resulting in suppression of interleukin-12 production in monocyte-derived dendritic cells. Involved in regulation of antiviral response by inhibiting RIGI- and IFIH1-mediated signaling pathways probably involving its association with MAVS after viral infection. Acts as a regulator of DNA repair via homologous recombination by inhibiting the activity of MRE11: interacts with unphosphorylated MRE11 and RAD50 in absence of DNA damage, preventing formation and activity of the MRN complex. Following DNA damage, dissociates from phosphorylated MRE11, allowing formation of the MRN complex. Functionally, (Microbial infection) Involved in HIV-1 replication, presumably by contributing to splicing of viral RNA. Its function is as follows. (Microbial infection) In infection processes acts as an attachment site for microbial proteins, including Listeria monocytogenes internalin B (InlB) and Staphylococcus aureus protein A. In terms of biological role, (Microbial infection) Involved in replication of Rubella virus. In Homo sapiens (Human), this protein is Complement component 1 Q subcomponent-binding protein, mitochondrial (C1QBP).